Here is a 453-residue protein sequence, read N- to C-terminus: tRNA modification GTPase MnmE (453 aa).

Residues arginine 22, glutamate 79, and lysine 119 each contribute to the (6S)-5-formyl-5,6,7,8-tetrahydrofolate site. The TrmE-type G domain maps to 215-376; it reads GMKVVIAGRP…LKQHLKSLMG (162 aa). Residue asparagine 225 participates in K(+) binding. GTP-binding positions include 225 to 230, 244 to 250, 269 to 272, and 334 to 337; these read NAGKSS, TEIAGTT, DTAG, and NKAD. Residue serine 229 participates in Mg(2+) binding. K(+)-binding residues include threonine 244, isoleucine 246, and threonine 249. Position 250 (threonine 250) interacts with Mg(2+). Residue lysine 453 participates in (6S)-5-formyl-5,6,7,8-tetrahydrofolate binding.

The protein belongs to the TRAFAC class TrmE-Era-EngA-EngB-Septin-like GTPase superfamily. TrmE GTPase family. Homodimer. Heterotetramer of two MnmE and two MnmG subunits. K(+) serves as cofactor.

Its subcellular location is the cytoplasm. Functionally, exhibits a very high intrinsic GTPase hydrolysis rate. Involved in the addition of a carboxymethylaminomethyl (cmnm) group at the wobble position (U34) of certain tRNAs, forming tRNA-cmnm(5)s(2)U34. This is tRNA modification GTPase MnmE from Shewanella baltica (strain OS155 / ATCC BAA-1091).